The following is a 380-amino-acid chain: Cytochrome b (380 aa).

Transmembrane regions (helical) follow at residues 34–54, 78–99, 114–134, and 179–199; these read FGSL…LLAM, WLIR…YLHI, WNTG…GYVL, and FFAL…IHLT. Heme b contacts are provided by His84 and His98. 2 residues coordinate heme b: His183 and His197. His202 serves as a coordination point for a ubiquinone. Helical transmembrane passes span 227 to 247, 289 to 309, 321 to 341, and 348 to 368; these read LKDI…ALFS, LGGV…PFLH, LSQL…WVGS, and FIII…ILFP.

It belongs to the cytochrome b family. The cytochrome bc1 complex contains 11 subunits: 3 respiratory subunits (MT-CYB, CYC1 and UQCRFS1), 2 core proteins (UQCRC1 and UQCRC2) and 6 low-molecular weight proteins (UQCRH/QCR6, UQCRB/QCR7, UQCRQ/QCR8, UQCR10/QCR9, UQCR11/QCR10 and a cleavage product of UQCRFS1). This cytochrome bc1 complex then forms a dimer. Heme b is required as a cofactor.

It is found in the mitochondrion inner membrane. In terms of biological role, component of the ubiquinol-cytochrome c reductase complex (complex III or cytochrome b-c1 complex) that is part of the mitochondrial respiratory chain. The b-c1 complex mediates electron transfer from ubiquinol to cytochrome c. Contributes to the generation of a proton gradient across the mitochondrial membrane that is then used for ATP synthesis. The sequence is that of Cytochrome b (MT-CYB) from Daption capense (Cape petrel).